The chain runs to 360 residues: Mitogen-activated protein kinase 1 (360 aa).

Alanine 2 is modified (N-acetylalanine). A Protein kinase domain is found at 25–313; the sequence is YTNLSYIGEG…VEQALAHPYL (289 aa). At serine 29 the chain carries Phosphoserine; by SGK1. ATP is bound by residues 31–39 and lysine 54; that span reads IGEGAYGMV. Catalysis depends on aspartate 149, which acts as the Proton acceptor. Residue threonine 185 is modified to Phosphothreonine; by MAP2K1 and MAP2K2. The short motif at 185–187 is the TXY element; that stretch reads TEY. At tyrosine 187 the chain carries Phosphotyrosine; by MAP2K1 and MAP2K2. The residue at position 190 (threonine 190) is a Phosphothreonine; by autocatalysis. Phosphoserine occurs at positions 246 and 248. The DNA-binding element occupies 259 to 277; the sequence is KARNYLLSLPHKNKVPWNR. Phosphoserine is present on serine 284. A Cytoplasmic retention motif motif is present at residues 318–322; that stretch reads DPSDE. The short motif at 327-333 is the Nuclear translocation motif element; that stretch reads APFKFDM.

Belongs to the protein kinase superfamily. CMGC Ser/Thr protein kinase family. MAP kinase subfamily. As to quaternary structure, binds both upstream activators and downstream substrates in multimolecular complexes. This interaction inhibits its tyrosine-kinase activity. Interacts with ADAM15, ARHGEF2, ARRB2, DAPK1 (via death domain), HSF4, IER3, IPO7, NISCH, SGK1, and isoform 1 of NEK2. Interacts (via phosphorylated form) with TPR (via C-terminal region and phosphorylated form); the interaction requires dimerization of MAPK1/ERK2 and increases following EGF stimulation. Interacts with MAP2K1. Interacts with DUSP6. Interacts (phosphorylated form) with CAV2 ('Tyr-19'-phosphorylated form); the interaction, promoted by insulin, leads to nuclear location and MAPK1 activation. Interacts with MORG1, PEA15 and MKNK2. MKNK2 isoform 1 binding prevents from dephosphorylation and inactivation. Interacts with DCC. The phosphorylated form interacts with PML (isoform PML-4). Interacts with STYX. Interacts with CDK2AP2. Interacts with CAVIN4. Interacts with DUSP7; the interaction enhances DUSP7 phosphatase activity. Interacts with GIT1; this interaction is necessary for MAPK1 localization to focal adhesions. Interacts with ZNF263. Interacts with phosphoglycerate kinase PGK1; the interaction is direct, occurs under hypoxic conditions, and promotes interaction between PGK1 and PIN1. (Microbial infection) Interacts with HIV-1 Nef through its SH3 domain. The cofactor is Mg(2+). In terms of processing, phosphorylated upon KIT and FLT3 signaling. Dually phosphorylated on Thr-185 and Tyr-187, which activates the enzyme. Undergoes regulatory phosphorylation on additional residues such as Ser-246 and Ser-248 in the kinase insert domain (KID) These phosphorylations, which are probably mediated by more than one kinase, are important for binding of MAPK1/ERK2 to importin-7 (IPO7) and its nuclear translocation. In addition, autophosphorylation of Thr-190 was shown to affect the subcellular localization of MAPK1/ERK2 as well. Ligand-activated ALK induces tyrosine phosphorylation. Dephosphorylated by PTPRJ at Tyr-187. Phosphorylation on Ser-29 by SGK1 results in its activation by enhancing its interaction with MAP2K1/MEK1 and MAP2K2/MEK2. DUSP3 and DUSP6 dephosphorylate specifically MAPK1/ERK2 and MAPK3/ERK1 whereas DUSP9 dephosphorylates a broader range of MAPKs. Dephosphorylated by DUSP1 and DUSP2 at Thr-185 and Tyr-187. Post-translationally, ISGylated. Ubiquitinated by TRIM15 via 'Lys-63'-linked ubiquitination; leading to activation. Deubiquitinated by CYLD.

The protein localises to the cytoplasm. It localises to the cytoskeleton. Its subcellular location is the spindle. It is found in the nucleus. The protein resides in the microtubule organizing center. The protein localises to the centrosome. It localises to the membrane. Its subcellular location is the caveola. It is found in the cell junction. The protein resides in the focal adhesion. It carries out the reaction L-seryl-[protein] + ATP = O-phospho-L-seryl-[protein] + ADP + H(+). The catalysed reaction is L-threonyl-[protein] + ATP = O-phospho-L-threonyl-[protein] + ADP + H(+). Its activity is regulated as follows. Phosphorylated by MAP2K1/MEK1 and MAP2K2/MEK2 on Thr-185 and Tyr-187 in response to external stimuli like insulin or NGF. Both phosphorylations are required for activity. This phosphorylation causes dramatic conformational changes, which enable full activation and interaction of MAPK1/ERK2 with its substrates. Phosphorylation on Ser-29 by SGK1 results in its activation by enhancing its interaction with MAP2K1/MEK1 and MAP2K2/MEK2. Dephosphorylated and inactivated by DUSP1, DUSP3, DUSP6 and DUSP9. Inactivated by pyrimidylpyrrole inhibitors. Its function is as follows. Serine/threonine kinase which acts as an essential component of the MAP kinase signal transduction pathway. MAPK1/ERK2 and MAPK3/ERK1 are the 2 MAPKs which play an important role in the MAPK/ERK cascade. They participate also in a signaling cascade initiated by activated KIT and KITLG/SCF. Depending on the cellular context, the MAPK/ERK cascade mediates diverse biological functions such as cell growth, adhesion, survival and differentiation through the regulation of transcription, translation, cytoskeletal rearrangements. The MAPK/ERK cascade also plays a role in initiation and regulation of meiosis, mitosis, and postmitotic functions in differentiated cells by phosphorylating a number of transcription factors. About 160 substrates have already been discovered for ERKs. Many of these substrates are localized in the nucleus, and seem to participate in the regulation of transcription upon stimulation. However, other substrates are found in the cytosol as well as in other cellular organelles, and those are responsible for processes such as translation, mitosis and apoptosis. Moreover, the MAPK/ERK cascade is also involved in the regulation of the endosomal dynamics, including lysosome processing and endosome cycling through the perinuclear recycling compartment (PNRC); as well as in the fragmentation of the Golgi apparatus during mitosis. The substrates include transcription factors (such as ATF2, BCL6, ELK1, ERF, FOS, HSF4 or SPZ1), cytoskeletal elements (such as CANX, CTTN, GJA1, MAP2, MAPT, PXN, SORBS3 or STMN1), regulators of apoptosis (such as BAD, BTG2, CASP9, DAPK1, IER3, MCL1 or PPARG), regulators of translation (such as EIF4EBP1 and FXR1) and a variety of other signaling-related molecules (like ARHGEF2, DCC, FRS2 or GRB10). Protein kinases (such as RAF1, RPS6KA1/RSK1, RPS6KA3/RSK2, RPS6KA2/RSK3, RPS6KA6/RSK4, SYK, MKNK1/MNK1, MKNK2/MNK2, RPS6KA5/MSK1, RPS6KA4/MSK2, MAPKAPK3 or MAPKAPK5) and phosphatases (such as DUSP1, DUSP4, DUSP6 or DUSP16) are other substrates which enable the propagation the MAPK/ERK signal to additional cytosolic and nuclear targets, thereby extending the specificity of the cascade. Mediates phosphorylation of TPR in response to EGF stimulation. May play a role in the spindle assembly checkpoint. Phosphorylates PML and promotes its interaction with PIN1, leading to PML degradation. Phosphorylates CDK2AP2. Phosphorylates phosphoglycerate kinase PGK1 under hypoxic conditions to promote its targeting to the mitochondrion and suppress the formation of acetyl-coenzyme A from pyruvate. In terms of biological role, acts as a transcriptional repressor. Binds to a [GC]AAA[GC] consensus sequence. Repress the expression of interferon gamma-induced genes. Seems to bind to the promoter of CCL5, DMP1, IFIH1, IFITM1, IRF7, IRF9, LAMP3, OAS1, OAS2, OAS3 and STAT1. Transcriptional activity is independent of kinase activity. In Homo sapiens (Human), this protein is Mitogen-activated protein kinase 1.